The primary structure comprises 596 residues: Membrane protein insertase YidC (596 aa).

The next 6 helical transmembrane spans lie at 4–24 (NKLI…HFFD), 332–352 (LGWP…FSFI), 359–379 (YGLV…PLSY), 425–445 (LSGC…FNFF), 468–488 (IINL…FTLL), and 518–538 (PITF…YYFV). Basic and acidic residues predominate over residues 565 to 584 (KNKEKSANNKEGSFKKRFQD). The interval 565 to 596 (KNKEKSANNKEGSFKKRFQDAIKASASHKGKK) is disordered.

The protein belongs to the OXA1/ALB3/YidC family. Type 1 subfamily. Interacts with the Sec translocase complex via SecD. Specifically interacts with transmembrane segments of nascent integral membrane proteins during membrane integration.

It is found in the cell inner membrane. Its function is as follows. Required for the insertion and/or proper folding and/or complex formation of integral membrane proteins into the membrane. Involved in integration of membrane proteins that insert both dependently and independently of the Sec translocase complex, as well as at least some lipoproteins. Aids folding of multispanning membrane proteins. The sequence is that of Membrane protein insertase YidC from Amoebophilus asiaticus (strain 5a2).